Reading from the N-terminus, the 178-residue chain is Large ribosomal subunit protein uL6 (178 aa).

It belongs to the universal ribosomal protein uL6 family. Part of the 50S ribosomal subunit.

Functionally, this protein binds to the 23S rRNA, and is important in its secondary structure. It is located near the subunit interface in the base of the L7/L12 stalk, and near the tRNA binding site of the peptidyltransferase center. This is Large ribosomal subunit protein uL6 from Opitutus terrae (strain DSM 11246 / JCM 15787 / PB90-1).